The primary structure comprises 226 residues: Protein YAE1 homolog (226 aa).

The interval 45 to 85 (GYRDGIDAGKAVTLQQGFNQGYKKGAEVILNYGRLRGTLSA) is deca-GX3 motif; required for interaction with LTO1.

As to quaternary structure, forms a complex with LTO1.

The protein resides in the cytoplasm. The protein localises to the nucleus. Functionally, the complex LTO1:YAE1 functions as a target specific adapter that probably recruits apo-ABCE1 to the cytosolic iron-sulfur protein assembly (CIA) complex machinery. May be required for biogenesis of the large ribosomal subunit and initiation of translation. The polypeptide is Protein YAE1 homolog (Homo sapiens (Human)).